The sequence spans 72 residues: Tetrahydromethanopterin S-methyltransferase subunit G (72 aa).

The helical transmembrane segment at 48–68 (IGILYGGFIGLLLFLIYTVVS) threads the bilayer.

This sequence belongs to the MtrG family. The complex is composed of 8 subunits; MtrA, MtrB, MtrC, MtrD, MtrE, MtrF, MtrG and MtrH.

It is found in the cell membrane. The enzyme catalyses 5-methyl-5,6,7,8-tetrahydromethanopterin + coenzyme M + 2 Na(+)(in) = 5,6,7,8-tetrahydromethanopterin + methyl-coenzyme M + 2 Na(+)(out). It functions in the pathway one-carbon metabolism; methanogenesis from CO(2); methyl-coenzyme M from 5,10-methylene-5,6,7,8-tetrahydromethanopterin: step 2/2. Functionally, part of a complex that catalyzes the formation of methyl-coenzyme M and tetrahydromethanopterin from coenzyme M and methyl-tetrahydromethanopterin. This is an energy-conserving, sodium-ion translocating step. The chain is Tetrahydromethanopterin S-methyltransferase subunit G from Methanosarcina barkeri (strain Fusaro / DSM 804).